Consider the following 551-residue polypeptide: Glucans biosynthesis protein D (551 aa).

The tat-type signal signal peptide spans M1–A32.

It belongs to the OpgD/OpgG family. Post-translationally, predicted to be exported by the Tat system. The position of the signal peptide cleavage has not been experimentally proven.

It localises to the periplasm. The protein operates within glycan metabolism; osmoregulated periplasmic glucan (OPG) biosynthesis. Functionally, probably involved in the control of the structural glucose backbone of osmoregulated periplasmic glucans (OPGs). This chain is Glucans biosynthesis protein D, found in Salmonella paratyphi A (strain ATCC 9150 / SARB42).